Consider the following 239-residue polypeptide: 4-hydroxy-tetrahydrodipicolinate reductase (239 aa).

NAD(+) contacts are provided by residues 12 to 17, 94 to 96, and 118 to 121; these read GASGRM, GTT, and ASNF. The Proton donor/acceptor role is filled by His-150. His-151 provides a ligand contact to (S)-2,3,4,5-tetrahydrodipicolinate. Lys-154 serves as the catalytic Proton donor. (S)-2,3,4,5-tetrahydrodipicolinate is bound at residue 160 to 161; the sequence is GT.

The protein belongs to the DapB family.

It localises to the cytoplasm. It catalyses the reaction (S)-2,3,4,5-tetrahydrodipicolinate + NAD(+) + H2O = (2S,4S)-4-hydroxy-2,3,4,5-tetrahydrodipicolinate + NADH + H(+). The catalysed reaction is (S)-2,3,4,5-tetrahydrodipicolinate + NADP(+) + H2O = (2S,4S)-4-hydroxy-2,3,4,5-tetrahydrodipicolinate + NADPH + H(+). It participates in amino-acid biosynthesis; L-lysine biosynthesis via DAP pathway; (S)-tetrahydrodipicolinate from L-aspartate: step 4/4. Functionally, catalyzes the conversion of 4-hydroxy-tetrahydrodipicolinate (HTPA) to tetrahydrodipicolinate. The polypeptide is 4-hydroxy-tetrahydrodipicolinate reductase (Stenotrophomonas maltophilia (strain R551-3)).